A 164-amino-acid chain; its full sequence is Monothiol glutaredoxin-S10 (164 aa).

One can recognise a Glutaredoxin domain in the interval 60–161 (EDSVKRTLAD…TMLSELDIDV (102 aa)). Cys-80 is a [2Fe-2S] cluster binding site.

It belongs to the glutaredoxin family. CPYC subfamily.

It localises to the cytoplasm. In terms of biological role, may only reduce GSH-thiol disulfides, but not protein disulfides. The polypeptide is Monothiol glutaredoxin-S10 (GRXS10) (Oryza sativa subsp. japonica (Rice)).